A 788-amino-acid chain; its full sequence is Protein translocase subunit SecA 2 (788 aa).

Residues Gln77, 95 to 99 (GEGKT), and Asp491 each bind ATP.

The protein belongs to the SecA family. As to quaternary structure, monomer and homodimer. Part of the essential Sec protein translocation apparatus which comprises SecA, SecYEG and auxiliary proteins SecDF. Other proteins may also be involved.

It is found in the cell membrane. The protein resides in the cytoplasm. The catalysed reaction is ATP + H2O + cellular proteinSide 1 = ADP + phosphate + cellular proteinSide 2.. In terms of biological role, part of the Sec protein translocase complex. Interacts with the SecYEG preprotein conducting channel. Has a central role in coupling the hydrolysis of ATP to the transfer of proteins into and across the cell membrane, serving as an ATP-driven molecular motor driving the stepwise translocation of polypeptide chains across the membrane. This Lactobacillus johnsonii (strain CNCM I-12250 / La1 / NCC 533) protein is Protein translocase subunit SecA 2.